We begin with the raw amino-acid sequence, 392 residues long: Tyrosine--tRNA ligase (392 aa).

The 'HIGH' region motif lies at 39 to 48 (PTAPDIHIGH). A 'KMSKS' region motif is present at residues 223 to 227 (KMSKS). K226 lines the ATP pocket. Residues 331-391 (IGIAQLLKQA…GKRRFARVVL (61 aa)) enclose the S4 RNA-binding domain.

The protein belongs to the class-I aminoacyl-tRNA synthetase family. TyrS type 2 subfamily. As to quaternary structure, homodimer.

Its subcellular location is the cytoplasm. It carries out the reaction tRNA(Tyr) + L-tyrosine + ATP = L-tyrosyl-tRNA(Tyr) + AMP + diphosphate + H(+). In terms of biological role, catalyzes the attachment of tyrosine to tRNA(Tyr) in a two-step reaction: tyrosine is first activated by ATP to form Tyr-AMP and then transferred to the acceptor end of tRNA(Tyr). The sequence is that of Tyrosine--tRNA ligase from Ralstonia nicotianae (strain ATCC BAA-1114 / GMI1000) (Ralstonia solanacearum).